The chain runs to 98 residues: Gas vesicle protein A (98 aa).

It belongs to the gas vesicle GvpA family. The gas vesicle shell is 2 nm thick and consists of a single layer of this protein. It forms helical ribs nearly perpendicular to the long axis of the vesicle.

Its subcellular location is the gas vesicle shell. Functionally, gas vesicles are hollow, gas filled proteinaceous nanostructures found in some microorganisms. During planktonic growth they allow positioning of the organism at a favorable depth for light or nutrient acquisition. GvpA forms the protein shell. In Koribacter versatilis (strain Ellin345), this protein is Gas vesicle protein A.